Here is a 340-residue protein sequence, read N- to C-terminus: Nucleoid-associated protein PSPA7_4451 (340 aa).

It belongs to the YejK family.

Its subcellular location is the cytoplasm. The protein localises to the nucleoid. The sequence is that of Nucleoid-associated protein PSPA7_4451 from Pseudomonas paraeruginosa (strain DSM 24068 / PA7) (Pseudomonas aeruginosa (strain PA7)).